We begin with the raw amino-acid sequence, 78 residues long: DNA-directed RNA polymerase subunit Rpo5 (78 aa).

Belongs to the archaeal Rpo5/eukaryotic RPB5 RNA polymerase subunit family. As to quaternary structure, part of the RNA polymerase complex.

The protein localises to the cytoplasm. The catalysed reaction is RNA(n) + a ribonucleoside 5'-triphosphate = RNA(n+1) + diphosphate. DNA-dependent RNA polymerase (RNAP) catalyzes the transcription of DNA into RNA using the four ribonucleoside triphosphates as substrates. The polypeptide is DNA-directed RNA polymerase subunit Rpo5 (Methanococcus vannielii (strain ATCC 35089 / DSM 1224 / JCM 13029 / OCM 148 / SB)).